The chain runs to 380 residues: Cytochrome b (380 aa).

4 helical membrane passes run 34–54 (FGSL…LLAM), 78–99 (WLIR…YLHI), 114–134 (WNTG…GYVL), and 179–199 (FFAL…IHLT). Positions 84 and 98 each coordinate heme b. H183 and H197 together coordinate heme b. Residue H202 coordinates a ubiquinone. The next 4 helical transmembrane spans lie at 227-247 (LKDA…ALFS), 289-309 (LGGV…PLLH), 321-341 (LSQL…WVGS), and 348-368 (FIII…ILFP).

It belongs to the cytochrome b family. As to quaternary structure, the cytochrome bc1 complex contains 11 subunits: 3 respiratory subunits (MT-CYB, CYC1 and UQCRFS1), 2 core proteins (UQCRC1 and UQCRC2) and 6 low-molecular weight proteins (UQCRH/QCR6, UQCRB/QCR7, UQCRQ/QCR8, UQCR10/QCR9, UQCR11/QCR10 and a cleavage product of UQCRFS1). This cytochrome bc1 complex then forms a dimer. Requires heme b as cofactor.

The protein localises to the mitochondrion inner membrane. Its function is as follows. Component of the ubiquinol-cytochrome c reductase complex (complex III or cytochrome b-c1 complex) that is part of the mitochondrial respiratory chain. The b-c1 complex mediates electron transfer from ubiquinol to cytochrome c. Contributes to the generation of a proton gradient across the mitochondrial membrane that is then used for ATP synthesis. The polypeptide is Cytochrome b (MT-CYB) (Oceanites oceanicus (Wilson's storm petrel)).